Consider the following 20-residue polypeptide: Dihydroorotase-like protein (20 aa).

Belongs to the metallo-dependent hydrolases superfamily. DHOase family. PyrC' subfamily. In terms of assembly, heterododecamer of 6 active PyrB subunits and 6 non-catalytic PyrC' subunits.

Functionally, non-functional DHOase. The protein is Dihydroorotase-like protein (pyrC') of Pseudomonas fluorescens biotype A.